We begin with the raw amino-acid sequence, 487 residues long: N-succinylglutamate 5-semialdehyde dehydrogenase (487 aa).

An NAD(+)-binding site is contributed by 221–226; sequence GSSRTG. Residues E244 and C278 contribute to the active site.

This sequence belongs to the aldehyde dehydrogenase family. AstD subfamily.

It carries out the reaction N-succinyl-L-glutamate 5-semialdehyde + NAD(+) + H2O = N-succinyl-L-glutamate + NADH + 2 H(+). The protein operates within amino-acid degradation; L-arginine degradation via AST pathway; L-glutamate and succinate from L-arginine: step 4/5. Its function is as follows. Catalyzes the NAD-dependent reduction of succinylglutamate semialdehyde into succinylglutamate. The polypeptide is N-succinylglutamate 5-semialdehyde dehydrogenase (Ectopseudomonas mendocina (strain ymp) (Pseudomonas mendocina)).